Here is a 34-residue protein sequence, read N- to C-terminus: Photosystem II reaction center protein Psb30 (34 aa).

The helical transmembrane segment at 6–26 (VIGQLIATGAIMLAGPAVIVL) threads the bilayer.

Belongs to the Psb30/Ycf12 family. In terms of assembly, PSII is composed of 1 copy each of membrane proteins PsbA, PsbB, PsbC, PsbD, PsbE, PsbF, PsbH, PsbI, PsbJ, PsbK, PsbL, PsbM, PsbT, PsbX, PsbY, PsbZ, Psb30/Ycf12, peripheral proteins of the oxygen-evolving complex and a large number of cofactors. It forms dimeric complexes.

The protein localises to the plastid. The protein resides in the chloroplast thylakoid membrane. In terms of biological role, a core subunit of photosystem II (PSII), probably helps stabilize the reaction center. The sequence is that of Photosystem II reaction center protein Psb30 from Trieres chinensis (Marine centric diatom).